Here is a 291-residue protein sequence, read N- to C-terminus: Bifunctional protein FolD (291 aa).

Residues 167–169 (GRS) and serine 192 each bind NADP(+).

Belongs to the tetrahydrofolate dehydrogenase/cyclohydrolase family. As to quaternary structure, homodimer.

The catalysed reaction is (6R)-5,10-methylene-5,6,7,8-tetrahydrofolate + NADP(+) = (6R)-5,10-methenyltetrahydrofolate + NADPH. It catalyses the reaction (6R)-5,10-methenyltetrahydrofolate + H2O = (6R)-10-formyltetrahydrofolate + H(+). It functions in the pathway one-carbon metabolism; tetrahydrofolate interconversion. Catalyzes the oxidation of 5,10-methylenetetrahydrofolate to 5,10-methenyltetrahydrofolate and then the hydrolysis of 5,10-methenyltetrahydrofolate to 10-formyltetrahydrofolate. The polypeptide is Bifunctional protein FolD (Leptospira biflexa serovar Patoc (strain Patoc 1 / Ames)).